The primary structure comprises 160 residues: Cytochrome c-type biogenesis protein CcmE (160 aa).

At 1–8 (MSAPRKTR) the chain is on the cytoplasmic side. Residues 9–29 (LYAILAVICGAVLTVALTLYA) traverse the membrane as a helical; Signal-anchor for type II membrane protein segment. The Periplasmic portion of the chain corresponds to 30–160 (LSSNIDLFYT…PAAVTEGKRL (131 aa)). Heme-binding residues include His-130 and Tyr-134.

The protein belongs to the CcmE/CycJ family.

Its subcellular location is the cell inner membrane. Heme chaperone required for the biogenesis of c-type cytochromes. Transiently binds heme delivered by CcmC and transfers the heme to apo-cytochromes in a process facilitated by CcmF and CcmH. The polypeptide is Cytochrome c-type biogenesis protein CcmE (Pectobacterium carotovorum subsp. carotovorum (strain PC1)).